Here is a 319-residue protein sequence, read N- to C-terminus: Acetyl esterase (319 aa).

The Involved in the stabilization of the negatively charged intermediate by the formation of the oxyanion hole motif lies at 91–93 (HGG). Catalysis depends on residues Ser-165, Asp-262, and His-292.

This sequence belongs to the 'GDXG' lipolytic enzyme family. Homodimer. Interacts with MalT and MelA.

Its subcellular location is the cytoplasm. Its function is as follows. Displays esterase activity towards short chain fatty esters (acyl chain length of up to 8 carbons). Able to hydrolyze triacetylglycerol (triacetin) and tributyrylglycerol (tributyrin), but not trioleylglycerol (triolein) or cholesterol oleate. Negatively regulates MalT activity by antagonizing maltotriose binding. Inhibits MelA galactosidase activity. The chain is Acetyl esterase from Escherichia coli O45:K1 (strain S88 / ExPEC).